We begin with the raw amino-acid sequence, 370 residues long: Aldo-keto reductase NECHADRAFT_45914 (370 aa).

D78 lines the NADP(+) pocket. The Proton donor role is filled by Y83. H174 contributes to the substrate binding site. NADP(+) contacts are provided by residues 204–205 (SS), Q230, 259–269 (APLASGRLARR), and 333–341 (STVQRIEEA).

This sequence belongs to the aldo/keto reductase family.

The protein operates within secondary metabolite biosynthesis. Its function is as follows. Aldo-keto reductase; part of the gene cluster that mediates the biosynthesis of sansalvamide, a cyclic pentadepsipeptide that shows promising results as potential anti-cancer drug. The nonribosmal peptide synthetase NRPS30 produces sansalvamide by incorporating successively one phenylalanine, one leucine, one alpha-hydroxyisocaproic acid (HICA), one valine and one leucine before sansalvamide is released from by cyclization by the terminal C domain of NRPS30. The HICA residue is probably provided by reduction of alpha-ketoisocaproate by the cluster-specific aldo-keto reductase (NECHADRAFT_45914). This Fusarium vanettenii (strain ATCC MYA-4622 / CBS 123669 / FGSC 9596 / NRRL 45880 / 77-13-4) (Fusarium solani subsp. pisi) protein is Aldo-keto reductase NECHADRAFT_45914.